A 327-amino-acid polypeptide reads, in one-letter code: Geranylgeranyl transferase type-2 subunit alpha (327 aa).

PFTA repeat units lie at residues 44 to 78, 84 to 118, 123 to 157, 163 to 197, and 207 to 241; these read YSIE…SLAS, FWDK…HYPT, VWQT…NIES, LDKE…RMFQ, and YIRT…NDIV.

The protein belongs to the protein prenyltransferase subunit alpha family. In terms of assembly, heterodimer of an alpha and a beta subunit.

The catalysed reaction is geranylgeranyl diphosphate + L-cysteinyl-[protein] = S-geranylgeranyl-L-cysteinyl-[protein] + diphosphate. Catalyzes the transfer of a geranyl-geranyl moiety from geranyl-geranyl pyrophosphate to proteins having the C-terminal -XCC or -XCXC, where both cysteines may become modified. Acts on YPT1 and SEC4. This chain is Geranylgeranyl transferase type-2 subunit alpha (BET4), found in Saccharomyces cerevisiae (strain ATCC 204508 / S288c) (Baker's yeast).